A 269-amino-acid chain; its full sequence is 4-hydroxy-tetrahydrodipicolinate reductase (269 aa).

NAD(+) is bound by residues 11 to 16 and E37; that span reads GASGRM. Residue R38 participates in NADP(+) binding. NAD(+)-binding positions include 101-103 and 125-128; these read GTT and AGNM. H158 functions as the Proton donor/acceptor in the catalytic mechanism. H159 contributes to the (S)-2,3,4,5-tetrahydrodipicolinate binding site. The active-site Proton donor is the K162. Residue 168–169 participates in (S)-2,3,4,5-tetrahydrodipicolinate binding; the sequence is GT.

Belongs to the DapB family.

The protein resides in the cytoplasm. It carries out the reaction (S)-2,3,4,5-tetrahydrodipicolinate + NAD(+) + H2O = (2S,4S)-4-hydroxy-2,3,4,5-tetrahydrodipicolinate + NADH + H(+). The catalysed reaction is (S)-2,3,4,5-tetrahydrodipicolinate + NADP(+) + H2O = (2S,4S)-4-hydroxy-2,3,4,5-tetrahydrodipicolinate + NADPH + H(+). The protein operates within amino-acid biosynthesis; L-lysine biosynthesis via DAP pathway; (S)-tetrahydrodipicolinate from L-aspartate: step 4/4. Catalyzes the conversion of 4-hydroxy-tetrahydrodipicolinate (HTPA) to tetrahydrodipicolinate. The polypeptide is 4-hydroxy-tetrahydrodipicolinate reductase (Ruegeria sp. (strain TM1040) (Silicibacter sp.)).